The chain runs to 237 residues: Sulfhydrogenase 2 subunit delta (237 aa).

Residues Cys-11, Cys-14, Cys-83, Cys-132, Cys-160, Cys-163, Cys-170, and Cys-179 each coordinate [4Fe-4S] cluster. [3Fe-4S] cluster contacts are provided by Cys-188, Cys-192, Cys-199, and Cys-202.

The protein belongs to the [NiFe]/[NiFeSe] hydrogenase small subunit family. Dimer of heterotetramer of alpha, beta, gamma and delta subunits. The nickel-containing alpha and delta subunits constitute the hydrogenase activity. The beta and gamma subunits (flavin-containing dimer) constitute the sulfur reductase activity. The cofactor is Ni(2+). Requires [4Fe-4S] cluster as cofactor. [3Fe-4S] cluster is required as a cofactor.

Its subcellular location is the cytoplasm. It carries out the reaction H2 + NADP(+) = NADPH + H(+). The catalysed reaction is H2 + NAD(+) = NADH + H(+). Functionally, part of a bifunctional enzyme complex that functions as a hydrogen-evolving hydrogenase with sulfur-reducing activity. May play a role in hydrogen cycling during fermentative growth. Activity exhibited with NAD in addition to NADPH. The alpha and delta subunits form the hydrogenase component that catalyzes the reduction of protons to evolve hydrogen. The polypeptide is Sulfhydrogenase 2 subunit delta (Pyrococcus furiosus (strain ATCC 43587 / DSM 3638 / JCM 8422 / Vc1)).